A 1195-amino-acid chain; its full sequence is Error-prone DNA polymerase (1195 aa).

The segment at 1163 to 1195 is disordered; the sequence is ALNGDRRDTPDAPAQRHRHPRDVRILPPSRDFH.

It belongs to the DNA polymerase type-C family. DnaE2 subfamily.

It is found in the cytoplasm. It carries out the reaction DNA(n) + a 2'-deoxyribonucleoside 5'-triphosphate = DNA(n+1) + diphosphate. Its function is as follows. DNA polymerase involved in damage-induced mutagenesis and translesion synthesis (TLS). It is not the major replicative DNA polymerase. The chain is Error-prone DNA polymerase from Rhodopseudomonas palustris (strain ATCC BAA-98 / CGA009).